Reading from the N-terminus, the 65-residue chain is Translational regulator CsrA (65 aa).

The protein belongs to the CsrA/RsmA family. As to quaternary structure, homodimer; the beta-strands of each monomer intercalate to form a hydrophobic core, while the alpha-helices form wings that extend away from the core.

It is found in the cytoplasm. A key translational regulator that binds mRNA to regulate translation initiation and/or mRNA stability. Mediates global changes in gene expression, shifting from rapid growth to stress survival by linking envelope stress, the stringent response and the catabolite repression systems. Usually binds in the 5'-UTR; binding at or near the Shine-Dalgarno sequence prevents ribosome-binding, repressing translation, binding elsewhere in the 5'-UTR can activate translation and/or stabilize the mRNA. Its function is antagonized by small RNA(s). This is Translational regulator CsrA from Pseudomonas putida (strain ATCC 47054 / DSM 6125 / CFBP 8728 / NCIMB 11950 / KT2440).